The chain runs to 406 residues: Tyrosine--tRNA ligase (406 aa).

Residue Tyr-35 coordinates L-tyrosine. Residues 40-49 (PTADSLHVGH) carry the 'HIGH' region motif. Positions 168 and 172 each coordinate L-tyrosine. The 'KMSKS' region signature appears at 228–232 (KMGKT). ATP is bound at residue Lys-231. Positions 340–404 (AELLDILVEA…RGKKNYNKIV (65 aa)) constitute an S4 RNA-binding domain.

Belongs to the class-I aminoacyl-tRNA synthetase family. TyrS type 1 subfamily. In terms of assembly, homodimer.

The protein resides in the cytoplasm. The enzyme catalyses tRNA(Tyr) + L-tyrosine + ATP = L-tyrosyl-tRNA(Tyr) + AMP + diphosphate + H(+). Functionally, catalyzes the attachment of tyrosine to tRNA(Tyr) in a two-step reaction: tyrosine is first activated by ATP to form Tyr-AMP and then transferred to the acceptor end of tRNA(Tyr). This chain is Tyrosine--tRNA ligase, found in Clostridium perfringens (strain 13 / Type A).